Consider the following 437-residue polypeptide: Type II methylase M.HgiEI (437 aa).

Residues 4-431 (FRFIDLFAGI…KRLQCVKLFE (428 aa)) form the SAM-dependent MTase C5-type domain. The active site involves C75.

It belongs to the class I-like SAM-binding methyltransferase superfamily. C5-methyltransferase family.

The enzyme catalyses a 2'-deoxycytidine in DNA + S-adenosyl-L-methionine = a 5-methyl-2'-deoxycytidine in DNA + S-adenosyl-L-homocysteine + H(+). Its function is as follows. A methylase that recognizes the double-stranded sequence 5'-GGWCC-3', methylates C-? on both strands, and protects the DNA from cleavage by the HgiEI endonuclease. This system is more active than isoschizomeric RM.HgiBI. The chain is Type II methylase M.HgiEI from Herpetosiphon aurantiacus (Herpetosiphon giganteus).